A 34-amino-acid polypeptide reads, in one-letter code: Photosystem II reaction center protein M (34 aa).

Residues 5 to 25 traverse the membrane as a helical segment; it reads ILAFIATALFILIPTAFLLII.

The protein belongs to the PsbM family. PSII is composed of 1 copy each of membrane proteins PsbA, PsbB, PsbC, PsbD, PsbE, PsbF, PsbH, PsbI, PsbJ, PsbK, PsbL, PsbM, PsbT, PsbX, PsbY, PsbZ, Psb30/Ycf12, at least 3 peripheral proteins of the oxygen-evolving complex and a large number of cofactors. It forms dimeric complexes.

Its subcellular location is the plastid. It is found in the chloroplast thylakoid membrane. In terms of biological role, one of the components of the core complex of photosystem II (PSII). PSII is a light-driven water:plastoquinone oxidoreductase that uses light energy to abstract electrons from H(2)O, generating O(2) and a proton gradient subsequently used for ATP formation. It consists of a core antenna complex that captures photons, and an electron transfer chain that converts photonic excitation into a charge separation. This subunit is found at the monomer-monomer interface. The chain is Photosystem II reaction center protein M from Lolium perenne (Perennial ryegrass).